The chain runs to 217 residues: Protein dao-4 (217 aa).

The first 21 residues, 1 to 21 (MKIALYSILLITVCYLSSTDA), serve as a signal peptide directing secretion.

It is found in the nucleus. The protein localises to the secreted. Its function is as follows. Probably acts downstream of the Wnt signaling pathway. This chain is Protein dao-4, found in Caenorhabditis elegans.